Consider the following 255-residue polypeptide: Syntaxin-23 (255 aa).

Residues 1-31 (MSFQDLEAGRGRSLASSRNINGGGSRQDTTQ) form a disordered region. Ser-2 is modified (N-acetylserine). Residues 14 to 31 (LASSRNINGGGSRQDTTQ) show a composition bias toward polar residues. The region spanning 184 to 246 (EAVIEEREQG…AQGKSHLVRH (63 aa)) is the t-SNARE coiled-coil homology domain.

The protein belongs to the syntaxin family. As to quaternary structure, part of the t-SNARE complex. Interacts with RGS1. As to expression, expressed at higher levels in leaves, flowers and stems than in roots.

Its subcellular location is the membrane. In terms of biological role, may function in the docking or fusion of transport vesicles with the prevacuolar membrane. This Arabidopsis thaliana (Mouse-ear cress) protein is Syntaxin-23 (SYP23).